Reading from the N-terminus, the 156-residue chain is CRIB domain-containing protein RIC11 (156 aa).

The 14-residue stretch at 26–39 (IGHPTEVKHVAHIG) folds into the CRIB domain. Residues 87 to 156 (QDQLNISDRI…SMVSRLNSNA (70 aa)) form a disordered region. The span at 109 to 120 (IHTKSKNRRKKP) shows a compositional bias: basic residues. Positions 121–142 (SSTSSPRSRPSPKSSRSMGLSK) are enriched in low complexity.

Its function is as follows. Functions as a downstream effector of Rho-related GTP binding proteins of the 'Rho of Plants' (ROPs) family. Participates in the propagation of ROP GTPase signals in specific cellular responses. The chain is CRIB domain-containing protein RIC11 (RIC11) from Arabidopsis thaliana (Mouse-ear cress).